We begin with the raw amino-acid sequence, 144 residues long: Large ribosomal subunit protein uL14 (144 aa).

The protein belongs to the universal ribosomal protein uL14 family. In terms of assembly, part of the 50S ribosomal subunit. Forms a cluster with proteins L3 and L24e, part of which may contact the 16S rRNA in 2 intersubunit bridges.

In terms of biological role, binds to 23S rRNA. Forms part of two intersubunit bridges in the 70S ribosome. This Cenarchaeum symbiosum (strain A) protein is Large ribosomal subunit protein uL14.